The sequence spans 282 residues: tRNA pseudouridine synthase A (282 aa).

Catalysis depends on Asp-51, which acts as the Nucleophile. Tyr-109 serves as a coordination point for substrate.

The protein belongs to the tRNA pseudouridine synthase TruA family. Homodimer.

It carries out the reaction uridine(38/39/40) in tRNA = pseudouridine(38/39/40) in tRNA. Formation of pseudouridine at positions 38, 39 and 40 in the anticodon stem and loop of transfer RNAs. The chain is tRNA pseudouridine synthase A from Delftia acidovorans (strain DSM 14801 / SPH-1).